A 513-amino-acid polypeptide reads, in one-letter code: ATP synthase subunit alpha (513 aa).

169-176 (GDRQTGKT) is a binding site for ATP.

Belongs to the ATPase alpha/beta chains family. As to quaternary structure, F-type ATPases have 2 components, CF(1) - the catalytic core - and CF(0) - the membrane proton channel. CF(1) has five subunits: alpha(3), beta(3), gamma(1), delta(1), epsilon(1). CF(0) has three main subunits: a(1), b(2) and c(9-12). The alpha and beta chains form an alternating ring which encloses part of the gamma chain. CF(1) is attached to CF(0) by a central stalk formed by the gamma and epsilon chains, while a peripheral stalk is formed by the delta and b chains.

It localises to the cell inner membrane. It catalyses the reaction ATP + H2O + 4 H(+)(in) = ADP + phosphate + 5 H(+)(out). Functionally, produces ATP from ADP in the presence of a proton gradient across the membrane. The alpha chain is a regulatory subunit. The polypeptide is ATP synthase subunit alpha (Cupriavidus pinatubonensis (strain JMP 134 / LMG 1197) (Cupriavidus necator (strain JMP 134))).